The chain runs to 130 residues: Small ribosomal subunit protein uS11c (130 aa).

This sequence belongs to the universal ribosomal protein uS11 family. Part of the 30S ribosomal subunit.

It localises to the plastid. Its subcellular location is the chloroplast. This chain is Small ribosomal subunit protein uS11c, found in Adiantum capillus-veneris (Maidenhair fern).